A 991-amino-acid polypeptide reads, in one-letter code: Translation initiation factor IF-2 (991 aa).

Disordered stretches follow at residues 126 to 220 (QADH…DVGE) and 325 to 359 (VKAAGDGDTAPAADDALAGKKKPGKKKKKPDVDEK). Composition is skewed to polar residues over residues 138–160 (QTESAVQTESAVQTESAVQTEPA) and 201–210 (PAAQTESAVQ). Residues 326–340 (KAAGDGDTAPAADDA) are compositionally biased toward low complexity. Residues 343 to 353 (GKKKPGKKKKK) show a composition bias toward basic residues. In terms of domain architecture, tr-type G spans 488 to 658 (IRPPVVTIMG…LTEAEIRELK (171 aa)). The interval 497–504 (GHVDHGKT) is G1. 497–504 (GHVDHGKT) is a binding site for GTP. Residues 522–526 (GITQH) form a G2 region. The tract at residues 544–547 (DTPG) is G3. GTP-binding positions include 544–548 (DTPGH) and 598–601 (NKID). The interval 598 to 601 (NKID) is G4. The tract at residues 634 to 636 (SAK) is G5.

This sequence belongs to the TRAFAC class translation factor GTPase superfamily. Classic translation factor GTPase family. IF-2 subfamily.

Its subcellular location is the cytoplasm. One of the essential components for the initiation of protein synthesis. Protects formylmethionyl-tRNA from spontaneous hydrolysis and promotes its binding to the 30S ribosomal subunits. Also involved in the hydrolysis of GTP during the formation of the 70S ribosomal complex. The polypeptide is Translation initiation factor IF-2 (Chlorobium phaeobacteroides (strain DSM 266 / SMG 266 / 2430)).